A 65-amino-acid chain; its full sequence is Large ribosomal subunit protein uL29 (65 aa).

It belongs to the universal ribosomal protein uL29 family.

This is Large ribosomal subunit protein uL29 from Brevibacillus brevis (strain 47 / JCM 6285 / NBRC 100599).